Here is a 365-residue protein sequence, read N- to C-terminus: DNA polymerase IV (365 aa).

The region spanning 14–198 (IIHIDMDAFF…LPIEKFHGVG (185 aa)) is the UmuC domain. Mg(2+)-binding residues include Asp18 and Asp116. Glu117 is a catalytic residue.

This sequence belongs to the DNA polymerase type-Y family. As to quaternary structure, monomer. Mg(2+) is required as a cofactor.

It localises to the cytoplasm. The enzyme catalyses DNA(n) + a 2'-deoxyribonucleoside 5'-triphosphate = DNA(n+1) + diphosphate. Its function is as follows. Poorly processive, error-prone DNA polymerase involved in untargeted mutagenesis. Copies undamaged DNA at stalled replication forks, which arise in vivo from mismatched or misaligned primer ends. These misaligned primers can be extended by PolIV. Exhibits no 3'-5' exonuclease (proofreading) activity. May be involved in translesional synthesis, in conjunction with the beta clamp from PolIII. The sequence is that of DNA polymerase IV from Streptococcus pyogenes serotype M3 (strain ATCC BAA-595 / MGAS315).